The chain runs to 75 residues: Putative UPF0377 protein YAL067W-A (75 aa).

It belongs to the UPF0377 family.

The polypeptide is Putative UPF0377 protein YAL067W-A (Saccharomyces cerevisiae (strain ATCC 204508 / S288c) (Baker's yeast)).